A 505-amino-acid polypeptide reads, in one-letter code: GMP synthase [glutamine-hydrolyzing] (505 aa).

The region spanning 3 to 190 is the Glutamine amidotransferase type-1 domain; it reads KVLVVNFGGQ…LRKIARISDV (188 aa). Residue Cys80 is the Nucleophile of the active site. Catalysis depends on residues His164 and Glu166. The GMPS ATP-PPase domain maps to 191-380; that stretch reads WRPEDQITRI…LGLPEDVVYR (190 aa). 218–224 contacts ATP; it reads SGGVDST.

The catalysed reaction is XMP + L-glutamine + ATP + H2O = GMP + L-glutamate + AMP + diphosphate + 2 H(+). The protein operates within purine metabolism; GMP biosynthesis; GMP from XMP (L-Gln route): step 1/1. Catalyzes the synthesis of GMP from XMP. The chain is GMP synthase [glutamine-hydrolyzing] from Pyrobaculum aerophilum (strain ATCC 51768 / DSM 7523 / JCM 9630 / CIP 104966 / NBRC 100827 / IM2).